The sequence spans 745 residues: Bacteriophage N4 adsorption protein B (745 aa).

3 consecutive transmembrane segments (helical) span residues 8–28 (FATW…IMFI), 362–382 (ISNF…LLLA), and 393–413 (FLSI…NFGL).

The protein resides in the cell inner membrane. Functionally, required for bacteriophage N4 adsorption. May be a component of the phage receptor. The sequence is that of Bacteriophage N4 adsorption protein B (nfrB) from Escherichia coli O157:H7.